The following is a 96-amino-acid chain: Aspartyl/glutamyl-tRNA(Asn/Gln) amidotransferase subunit C (96 aa).

It belongs to the GatC family. Heterotrimer of A, B and C subunits.

The catalysed reaction is L-glutamyl-tRNA(Gln) + L-glutamine + ATP + H2O = L-glutaminyl-tRNA(Gln) + L-glutamate + ADP + phosphate + H(+). It catalyses the reaction L-aspartyl-tRNA(Asn) + L-glutamine + ATP + H2O = L-asparaginyl-tRNA(Asn) + L-glutamate + ADP + phosphate + 2 H(+). In terms of biological role, allows the formation of correctly charged Asn-tRNA(Asn) or Gln-tRNA(Gln) through the transamidation of misacylated Asp-tRNA(Asn) or Glu-tRNA(Gln) in organisms which lack either or both of asparaginyl-tRNA or glutaminyl-tRNA synthetases. The reaction takes place in the presence of glutamine and ATP through an activated phospho-Asp-tRNA(Asn) or phospho-Glu-tRNA(Gln). This Exiguobacterium sibiricum (strain DSM 17290 / CCUG 55495 / CIP 109462 / JCM 13490 / 255-15) protein is Aspartyl/glutamyl-tRNA(Asn/Gln) amidotransferase subunit C.